The following is a 222-amino-acid chain: Riboflavin kinase (222 aa).

Positions 1-94 are H-T-H motif-like; it reads METIDAEDAA…AKIFDVKDEQ (94 aa). A riboflavin kinase region spans residues 95–222; the sequence is YVLTGTVMSG…ENSEVVVVIG (128 aa). 104-109 provides a ligand contact to CDP; that stretch reads GVGEGR. 2 residues coordinate Mg(2+): T133 and N135. Residues T190 and E198 each contribute to the FMN site. 203 to 206 contributes to the CDP binding site; that stretch reads TQLR.

Belongs to the archaeal riboflavin kinase family. It depends on Mg(2+) as a cofactor.

The enzyme catalyses riboflavin + CTP = CDP + FMN + H(+). Its pathway is cofactor biosynthesis; FMN biosynthesis; FMN from riboflavin (CTP route): step 1/1. Catalyzes the CTP-dependent phosphorylation of riboflavin (vitamin B2) to form flavin mononucleotide (FMN). This is Riboflavin kinase (ribK) from Methanocorpusculum labreanum (strain ATCC 43576 / DSM 4855 / Z).